The primary structure comprises 70 residues: DNA-directed RNA polymerase subunit omega (70 aa).

The protein belongs to the RNA polymerase subunit omega family. The RNAP catalytic core consists of 2 alpha, 1 beta, 1 beta' and 1 omega subunit. When a sigma factor is associated with the core the holoenzyme is formed, which can initiate transcription.

The enzyme catalyses RNA(n) + a ribonucleoside 5'-triphosphate = RNA(n+1) + diphosphate. In terms of biological role, promotes RNA polymerase assembly. Latches the N- and C-terminal regions of the beta' subunit thereby facilitating its interaction with the beta and alpha subunits. This Clostridium perfringens (strain ATCC 13124 / DSM 756 / JCM 1290 / NCIMB 6125 / NCTC 8237 / Type A) protein is DNA-directed RNA polymerase subunit omega.